The chain runs to 341 residues: MAGVMSVKDFIVATKYKLIRKIGSGSFGDIYVSINVTNGEEVAIKLESNRARHPQLLYESKVYRILQGGVGIPHIRWYGTEREYNVLVMDLLGPSLEDLFNFCSRRFTMKTVLMLADQMIGRIEYVHVKNFIHRDIKPDNFLMGIGRHCNKLFLIDFGLAKKYRDSRTRTHIPYREDKNLTGTARYASINAHLGIEQSRRDDMESLGYVLMYFNRGTLPWQGLKAATKKQKYEKISEKKMTTSVEHLCKGFPAEFPMYLSYTRGLRFDESPDYMYLRQLFRILFRTLNHQYDYTFDWTMLKQKAQQSQSSGVPGTNTTTQGATVPSAGVPAGVAPGGTTPQ.

A Protein kinase domain is found at 16–284 (YKLIRKIGSG…YLRQLFRILF (269 aa)). Residues 22–30 (IGSGSFGDI) and K45 contribute to the ATP site. Residue D135 is the Proton acceptor of the active site. The span at 306–320 (QSQSSGVPGTNTTTQ) shows a compositional bias: polar residues. Residues 306–341 (QSQSSGVPGTNTTTQGATVPSAGVPAGVAPGGTTPQ) form a disordered region. A compositionally biased stretch (low complexity) spans 321–341 (GATVPSAGVPAGVAPGGTTPQ).

The protein belongs to the protein kinase superfamily. CK1 Ser/Thr protein kinase family. Casein kinase I subfamily.

It carries out the reaction L-seryl-[protein] + ATP = O-phospho-L-seryl-[protein] + ADP + H(+). The enzyme catalyses L-threonyl-[protein] + ATP = O-phospho-L-threonyl-[protein] + ADP + H(+). The chain is Casein kinase I isoform alpha (kin-19) from Caenorhabditis elegans.